The primary structure comprises 396 residues: Interleukin enhancer-binding factor 2 homolog (396 aa).

In terms of domain architecture, DZF spans Lys-22–Ile-379. The disordered stretch occupies residues Pro-367–Glu-396. Acidic residues predominate over residues Asp-374–Glu-396.

The protein localises to the nucleus. Functionally, may regulate transcription of undefined genes. The chain is Interleukin enhancer-binding factor 2 homolog from Drosophila melanogaster (Fruit fly).